Consider the following 122-residue polypeptide: Small ribosomal subunit protein uS13 (122 aa).

Residues 94 to 122 (RGLPVRGQRTKTNARQRKGPRPAIGGRKK) form a disordered region.

The protein belongs to the universal ribosomal protein uS13 family. In terms of assembly, part of the 30S ribosomal subunit. Forms a loose heterodimer with protein S19. Forms two bridges to the 50S subunit in the 70S ribosome.

Functionally, located at the top of the head of the 30S subunit, it contacts several helices of the 16S rRNA. In the 70S ribosome it contacts the 23S rRNA (bridge B1a) and protein L5 of the 50S subunit (bridge B1b), connecting the 2 subunits; these bridges are implicated in subunit movement. Contacts the tRNAs in the A and P-sites. This chain is Small ribosomal subunit protein uS13, found in Rubrobacter xylanophilus (strain DSM 9941 / JCM 11954 / NBRC 16129 / PRD-1).